We begin with the raw amino-acid sequence, 48 residues long: MSNSQAPMQAVEVRVYPIFTVRWLAVHALAIPSVFFLGAIAAMQFISR.

A helical membrane pass occupies residues 23-39 (WLAVHALAIPSVFFLGA). H27 is a heme binding site.

The protein belongs to the PsbE/PsbF family. In terms of assembly, heterodimer of an alpha subunit and a beta subunit. PSII is composed of 1 copy each of membrane proteins PsbA, PsbB, PsbC, PsbD, PsbE, PsbF, PsbH, PsbI, PsbJ, PsbK, PsbL, PsbM, PsbT, PsbX, PsbY, Psb30/Ycf12, peripheral proteins PsbO, CyanoQ (PsbQ), PsbU, PsbV and a large number of cofactors. It forms dimeric complexes. It depends on heme b as a cofactor.

Its subcellular location is the cellular thylakoid membrane. Functionally, this b-type cytochrome is tightly associated with the reaction center of photosystem II (PSII). PSII is a light-driven water:plastoquinone oxidoreductase that uses light energy to abstract electrons from H(2)O, generating O(2) and a proton gradient subsequently used for ATP formation. It consists of a core antenna complex that captures photons, and an electron transfer chain that converts photonic excitation into a charge separation. The chain is Cytochrome b559 subunit beta from Prochlorococcus marinus (strain MIT 9515).